A 404-amino-acid polypeptide reads, in one-letter code: Serine/threonine transporter SstT (404 aa).

The next 9 membrane-spanning stretches (helical) occupy residues 12-32 (GGNLVLRIAIGLVLGACLALV), 53-73 (AIAPILVFVLVLSAIANKEVG), 81-101 (ILVMYVLGTFVAALTAVVLSF), 140-160 (ALANANFIGILAWAIGLGIAL), 177-197 (AVSFVVKVVIAFAPIGVFGLV), 216-236 (LGVLLGAMVIVAFVLNPLIVF), 287-307 (VAIPLGATINMAGAAITVTVL), 329-349 (IVASVCACGASGVAGGSLLLI), and 356-376 (FNIPNDIAAQVIGVGFIIGVI).

This sequence belongs to the dicarboxylate/amino acid:cation symporter (DAACS) (TC 2.A.23) family.

The protein localises to the cell inner membrane. It carries out the reaction L-serine(in) + Na(+)(in) = L-serine(out) + Na(+)(out). The catalysed reaction is L-threonine(in) + Na(+)(in) = L-threonine(out) + Na(+)(out). Its function is as follows. Involved in the import of serine and threonine into the cell, with the concomitant import of sodium (symport system). The polypeptide is Serine/threonine transporter SstT (Actinobacillus pleuropneumoniae serotype 7 (strain AP76)).